Here is a 355-residue protein sequence, read N- to C-terminus: N5-carboxyaminoimidazole ribonucleotide synthase (355 aa).

Residues Arg80, Lys120, 125–131 (GYDGRGQ), 153–156 (EQGI), Glu161, His184, and 237–238 (NE) each bind ATP. One can recognise an ATP-grasp domain in the interval 84-267 (KQLFDKLHLP…QFELHLRAIT (184 aa)).

This sequence belongs to the PurK/PurT family. As to quaternary structure, homodimer.

The enzyme catalyses 5-amino-1-(5-phospho-beta-D-ribosyl)imidazole + hydrogencarbonate + ATP = 5-carboxyamino-1-(5-phospho-D-ribosyl)imidazole + ADP + phosphate + 2 H(+). The protein operates within purine metabolism; IMP biosynthesis via de novo pathway; 5-amino-1-(5-phospho-D-ribosyl)imidazole-4-carboxylate from 5-amino-1-(5-phospho-D-ribosyl)imidazole (N5-CAIR route): step 1/2. Functionally, catalyzes the ATP-dependent conversion of 5-aminoimidazole ribonucleotide (AIR) and HCO(3)(-) to N5-carboxyaminoimidazole ribonucleotide (N5-CAIR). This is N5-carboxyaminoimidazole ribonucleotide synthase from Escherichia coli (strain K12).